The following is a 403-amino-acid chain: Large ribosomal subunit protein uL3 (403 aa).

Positions 1 to 37 (MSHRKFSAPRHGSLGFLPRKRSSRHRGKVKSFPKDDP) are disordered. Phosphoserine is present on Ser13. A compositionally biased stretch (basic residues) spans 18–31 (PRKRSSRHRGKVKS). Lys39 participates in a covalent cross-link: Glycyl lysine isopeptide (Lys-Gly) (interchain with G-Cter in SUMO2). Lys136 is subject to N6-acetyllysine. Glycyl lysine isopeptide (Lys-Gly) (interchain with G-Cter in SUMO2) cross-links involve residues Lys224 and Lys226. At His245 the chain carries Tele-methylhistidine. Residues Lys286 and Lys294 each carry the N6-acetyllysine; alternate modification. Residue Lys286 forms a Glycyl lysine isopeptide (Lys-Gly) (interchain with G-Cter in SUMO2); alternate linkage. Lys294 participates in a covalent cross-link: Glycyl lysine isopeptide (Lys-Gly) (interchain with G-Cter in SUMO1); alternate. Phosphoserine is present on Ser304. The residue at position 366 (Lys366) is an N6-acetyllysine; alternate. Lys366 participates in a covalent cross-link: Glycyl lysine isopeptide (Lys-Gly) (interchain with G-Cter in SUMO2); alternate. An N6-acetyllysine modification is found at Lys373. Residues Lys386, Lys393, and Lys399 each participate in a glycyl lysine isopeptide (Lys-Gly) (interchain with G-Cter in SUMO2) cross-link.

Belongs to the universal ribosomal protein uL3 family. As to quaternary structure, component of the large ribosomal subunit. Interacts with DHX33. Constitutively monomethylated at His-245 by METTL18. Methylation at His-245 regulates translation elongation by slowing ribosome traversal on tyrosine codons: slower elongation provides enough time for proper folding of synthesized proteins and prevents cellular aggregation of tyrosine-rich proteins. It is not required for incorporation of RPL3 into ribosomes.

It localises to the nucleus. The protein resides in the nucleolus. It is found in the cytoplasm. In terms of biological role, component of the large ribosomal subunit. The ribosome is a large ribonucleoprotein complex responsible for the synthesis of proteins in the cell. The polypeptide is Large ribosomal subunit protein uL3 (RPL3) (Oryctolagus cuniculus (Rabbit)).